The chain runs to 185 residues: Protein OPG161 (185 aa).

The Intravirion portion of the chain corresponds to 1-33 (MMTPENDEEQTSVFSATVYGDKIQGKNKRKRVI). Residues 34–56 (GLCIRISMVISLLSMITMSAFLI) traverse the membrane as a helical segment. Topologically, residues 57-185 (VRLNQCMSAN…RKYFCVKTMN (129 aa)) are virion surface. Residues 98–185 (ESCNGLYYQG…RKYFCVKTMN (88 aa)) form a C-type lectin-like domain region. N-linked (GlcNAc...) asparagine; by host glycans are attached at residues N125 and N135.

The protein belongs to the orthopoxvirus OPG161 family. In terms of assembly, homodimer, disulfide-linked. Interacts with protein OPG190. Interacts (via C-terminus) with protein OPG164. Interacts with OPG162.

It localises to the virion membrane. Its subcellular location is the host membrane. In terms of biological role, forms a complex with OPG162 and OPG190 to coordinate the incorporation of OPG164 into wrapped enveloped virion (EV) membranes and, subsequently, the production of actin tails. Therefore plays an essential role in efficient cell-to-cell spread of viral particles. The chain is Protein OPG161 (OPG161) from Homo sapiens (Human).